The sequence spans 256 residues: Thiazole synthase (256 aa).

Lys-96 functions as the Schiff-base intermediate with DXP in the catalytic mechanism. 1-deoxy-D-xylulose 5-phosphate contacts are provided by residues Gly-157, 183-184 (AG), and 205-206 (NT).

The protein belongs to the ThiG family. In terms of assembly, homotetramer. Forms heterodimers with either ThiH or ThiS.

The protein localises to the cytoplasm. The catalysed reaction is [ThiS sulfur-carrier protein]-C-terminal-Gly-aminoethanethioate + 2-iminoacetate + 1-deoxy-D-xylulose 5-phosphate = [ThiS sulfur-carrier protein]-C-terminal Gly-Gly + 2-[(2R,5Z)-2-carboxy-4-methylthiazol-5(2H)-ylidene]ethyl phosphate + 2 H2O + H(+). It functions in the pathway cofactor biosynthesis; thiamine diphosphate biosynthesis. Functionally, catalyzes the rearrangement of 1-deoxy-D-xylulose 5-phosphate (DXP) to produce the thiazole phosphate moiety of thiamine. Sulfur is provided by the thiocarboxylate moiety of the carrier protein ThiS. In vitro, sulfur can be provided by H(2)S. This chain is Thiazole synthase, found in Clostridium beijerinckii (strain ATCC 51743 / NCIMB 8052) (Clostridium acetobutylicum).